The sequence spans 449 residues: Tapasin (449 aa).

An N-terminal signal peptide occupies residues 1 to 20 (MKPLSLLLAVASALGTAVSA). Residues 21–413 (GPAVIECWMV…GLSGPSLEDS (393 aa)) are Lumenal-facing. An intrachain disulfide couples C27 to C91. N-linked (GlcNAc...) asparagine glycosylation occurs at N253. Residues 292 to 399 (PKISLTPAPL…PTLGRSAEVT (108 aa)) form the Ig-like C1-type domain. Residues C315 and C382 are joined by a disulfide bond. The chain crosses the membrane as a helical span at residues 414–434 (VGLFLSAFLLLGLIKALGWVA). The Cytoplasmic segment spans residues 435–449 (ASRSTSKDPKEKKAQ).

Heterodimer with PDIA3; disulfide-linked. Obligatory mediator for the interaction between newly assembled MHC class I molecules, calreticulin, PDIA3 and TAP. Up to 4 MHC class I/tapasin complexes bind to 1 TAP. Interacts with HLA-G-B2M complex; this interaction is required for loading of high affinity peptides. On its own or as part of MHC class I peptide loading complex, interacts with ligand-free MR1 or MR1-B2M complex, providing for stable MR1 pools ready for metabolite antigen processing.

The protein resides in the endoplasmic reticulum membrane. Its function is as follows. Involved in the association of MHC class I with transporter associated with antigen processing (TAP) and in the assembly of MHC class I with peptide (peptide loading). In Canis lupus familiaris (Dog), this protein is Tapasin (TAPBP).